Reading from the N-terminus, the 63-residue chain is Large ribosomal subunit protein bL35 (63 aa).

2 stretches are compositionally biased toward basic residues: residues 1–25 (MPKM…KHRQ) and 32–47 (LTKK…RPKK). The tract at residues 1-55 (MPKMKSKSSAAKRFKKTANGFKHRQSFTSHILTKKSTKRKRHLRPKKQVNPSDVP) is disordered.

This sequence belongs to the bacterial ribosomal protein bL35 family.

The chain is Large ribosomal subunit protein bL35 from Hahella chejuensis (strain KCTC 2396).